The primary structure comprises 344 residues: MPMERFLKDFTIPEKIEFLKSQDDGSYGKFTIYPFERGFGVTIGNTLRRVLLSSIEGYAITAMRVQSNNKDSSSKVVSSEFDLIPGVSEDTLEVIANIKNIHLKLREGEQRKTISFSVSGKDTNVLKASHFERDGVEVFNKDLVIATLSHDVNLDFEFQINYGRGYVSSEQNSKYLEEVNVIALDSIFSPIEKVSYSVEDTRVGQRSDYDKLVMEIWTTGVISAKDAIKKAASIVREFLFPLVDFEDSVSVSFDKSKSESSNLLDMSIEKLDLSVRSLNCLAKENVRTLGELISKNAEELSKARNFGKKSLEEIIEKLGSYQLFLGMSKEDALSVLSKNVKISE.

Residues 1–246 (MPMERFLKDF…EFLFPLVDFE (246 aa)) are alpha N-terminal domain (alpha-NTD). The tract at residues 259–344 (ESSNLLDMSI…VLSKNVKISE (86 aa)) is alpha C-terminal domain (alpha-CTD).

Belongs to the RNA polymerase alpha chain family. In terms of assembly, homodimer. The RNAP catalytic core consists of 2 alpha, 1 beta, 1 beta' and 1 omega subunit. When a sigma factor is associated with the core the holoenzyme is formed, which can initiate transcription.

The enzyme catalyses RNA(n) + a ribonucleoside 5'-triphosphate = RNA(n+1) + diphosphate. Its function is as follows. DNA-dependent RNA polymerase catalyzes the transcription of DNA into RNA using the four ribonucleoside triphosphates as substrates. In Borreliella afzelii (strain PKo) (Borrelia afzelii), this protein is DNA-directed RNA polymerase subunit alpha.